We begin with the raw amino-acid sequence, 253 residues long: Probable transcriptional regulatory protein Hore_12350 (253 aa).

Residues 1 to 21 (MAGHSKWANIKHKKAKEDRKR) are disordered.

The protein belongs to the TACO1 family.

The protein localises to the cytoplasm. The protein is Probable transcriptional regulatory protein Hore_12350 of Halothermothrix orenii (strain H 168 / OCM 544 / DSM 9562).